Reading from the N-terminus, the 231-residue chain is CLAVATA3/ESR (CLE)-related protein 4B-1 (231 aa).

The N-terminal stretch at 1 to 21 (MATNTMLCLLILSVVLALAFA) is a signal peptide. The required for secretion from the host cytoplasm to the host apoplasm stretch occupies residues 21–83 (ATNKKGDEEP…SNLLPNNNWM (63 aa)). N-linked (GlcNAc...) asparagine glycosylation is present at Asn-32. Residues 116-231 (RKTGMHSQRH…APAGPDPIHH (116 aa)) are disordered. Basic and acidic residues-rich tracts occupy residues 125-137 (HHEE…EKRV) and 144-221 (PIHH…EKRG). The A-1 repeat unit spans residues 127–135 (EETTLEQEK). Positions 127-219 (EETTLEQEKR…HEETTFEQEK (93 aa)) are 5 X approximate repeat A. A CLE-1 repeat occupies 136-147 (RVAGAGPDPIHH). Residues 136-231 (RVAGAGPDPI…APAGPDPIHH (96 aa)) form a 5 X approximate repeat CLE region. One copy of the A-2 repeat lies at 148 to 156 (QDTTLEQEK). The CLE-2 repeat unit spans residues 157 to 168 (RAVPAGPDPKHH). Residues 169–177 (EETTLEQEK) form an A-3 repeat. A CLE-3 repeat occupies 178 to 189 (RAVPAGPDPKHH). The A-4 repeat unit spans residues 190-198 (EETTLEQEK). The stretch at 199–210 (RAVPAGPDPKHH) is one CLE-4 repeat. One copy of the A-5 repeat lies at 211–219 (EETTFEQEK). The CLE-5 repeat unit spans residues 220–231 (RGAPAGPDPIHH).

This sequence belongs to the CLV3/ESR signal peptide family. Highly expressed exclusively within the dorsal esophageal gland cell during syncytium formation in host plants.

Its subcellular location is the secreted. It localises to the host cytoplasm. It is found in the host extracellular space. The protein localises to the extracellular space. The protein resides in the apoplast. In terms of biological role, mimics host plant CLE extracellular signal peptides that regulate cell fate. May play a role in the differentiation or division of feeding cells (syncytia) induced in plant roots during infection. The protein is CLAVATA3/ESR (CLE)-related protein 4B-1 (CLE-4B-1) of Globodera rostochiensis (Golden nematode worm).